Consider the following 113-residue polypeptide: UPF0251 protein Teth514_1147 (113 aa).

This sequence belongs to the UPF0251 family.

This chain is UPF0251 protein Teth514_1147, found in Thermoanaerobacter sp. (strain X514).